We begin with the raw amino-acid sequence, 61 residues long: Conotoxin Vn5.3 (61 aa).

A signal peptide spans 1–19 (MHCLPVFVILLLLIASAPG). Residues 20–50 (VDVQPKTKNFMTRASLRDFAKKTPKRLSKLR) constitute a propeptide that is removed on maturation.

This sequence belongs to the conotoxin T superfamily. Post-translationally, contains 2 disulfide bonds that can be either 'C1-C3, C2-C4' or 'C1-C4, C2-C3', since these disulfide connectivities have been observed for conotoxins with cysteine framework V (for examples, see AC P0DQQ7 and AC P81755). In terms of tissue distribution, expressed by the venom duct.

The protein resides in the secreted. The chain is Conotoxin Vn5.3 from Conus ventricosus (Mediterranean cone).